Here is a 133-residue protein sequence, read N- to C-terminus: Small ribosomal subunit protein uS8 (133 aa).

Belongs to the universal ribosomal protein uS8 family. Part of the 30S ribosomal subunit. Contacts proteins S5 and S12.

Functionally, one of the primary rRNA binding proteins, it binds directly to 16S rRNA central domain where it helps coordinate assembly of the platform of the 30S subunit. In Chlamydia abortus (strain DSM 27085 / S26/3) (Chlamydophila abortus), this protein is Small ribosomal subunit protein uS8.